The following is a 289-amino-acid chain: Ribosomal RNA small subunit methyltransferase A (289 aa).

Residues Asn21, Leu23, Gly48, Glu69, Asp94, and Asn120 each coordinate S-adenosyl-L-methionine.

This sequence belongs to the class I-like SAM-binding methyltransferase superfamily. rRNA adenine N(6)-methyltransferase family. RsmA subfamily.

It is found in the cytoplasm. It catalyses the reaction adenosine(1518)/adenosine(1519) in 16S rRNA + 4 S-adenosyl-L-methionine = N(6)-dimethyladenosine(1518)/N(6)-dimethyladenosine(1519) in 16S rRNA + 4 S-adenosyl-L-homocysteine + 4 H(+). In terms of biological role, specifically dimethylates two adjacent adenosines (A1518 and A1519) in the loop of a conserved hairpin near the 3'-end of 16S rRNA in the 30S particle. May play a critical role in biogenesis of 30S subunits. This chain is Ribosomal RNA small subunit methyltransferase A, found in Actinobacillus pleuropneumoniae serotype 5b (strain L20).